Consider the following 378-residue polypeptide: Erythronate-4-phosphate dehydrogenase (378 aa).

2 residues coordinate substrate: S45 and T66. Residues D146 and T175 each contribute to the NAD(+) site. Residue R208 is part of the active site. An NAD(+)-binding site is contributed by D232. E237 is a catalytic residue. The active-site Proton donor is the H254. Position 257 (G257) interacts with NAD(+). Position 258 (Y258) interacts with substrate.

Belongs to the D-isomer specific 2-hydroxyacid dehydrogenase family. PdxB subfamily. As to quaternary structure, homodimer.

The protein resides in the cytoplasm. The catalysed reaction is 4-phospho-D-erythronate + NAD(+) = (R)-3-hydroxy-2-oxo-4-phosphooxybutanoate + NADH + H(+). The protein operates within cofactor biosynthesis; pyridoxine 5'-phosphate biosynthesis; pyridoxine 5'-phosphate from D-erythrose 4-phosphate: step 2/5. In terms of biological role, catalyzes the oxidation of erythronate-4-phosphate to 3-hydroxy-2-oxo-4-phosphonooxybutanoate. This is Erythronate-4-phosphate dehydrogenase from Escherichia coli O7:K1 (strain IAI39 / ExPEC).